A 130-amino-acid polypeptide reads, in one-letter code: Ribosome-binding factor A (130 aa).

Residues 111-130 (RDLDDVGPGATSSDEDAEQR) are disordered.

This sequence belongs to the RbfA family. Monomer. Binds 30S ribosomal subunits, but not 50S ribosomal subunits or 70S ribosomes.

It is found in the cytoplasm. Its function is as follows. One of several proteins that assist in the late maturation steps of the functional core of the 30S ribosomal subunit. Associates with free 30S ribosomal subunits (but not with 30S subunits that are part of 70S ribosomes or polysomes). Required for efficient processing of 16S rRNA. May interact with the 5'-terminal helix region of 16S rRNA. The chain is Ribosome-binding factor A from Xanthomonas oryzae pv. oryzae (strain MAFF 311018).